Reading from the N-terminus, the 173-residue chain is Dual-action ribosomal maturation protein DarP (173 aa).

Belongs to the DarP family.

It localises to the cytoplasm. Member of a network of 50S ribosomal subunit biogenesis factors which assembles along the 30S-50S interface, preventing incorrect 23S rRNA structures from forming. Promotes peptidyl transferase center (PTC) maturation. This Pseudomonas fluorescens (strain ATCC BAA-477 / NRRL B-23932 / Pf-5) protein is Dual-action ribosomal maturation protein DarP.